A 458-amino-acid polypeptide reads, in one-letter code: UDP-N-acetylmuramate--L-alanine ligase (458 aa).

118–124 is a binding site for ATP; it reads GTHGKTT.

Belongs to the MurCDEF family.

It localises to the cytoplasm. The catalysed reaction is UDP-N-acetyl-alpha-D-muramate + L-alanine + ATP = UDP-N-acetyl-alpha-D-muramoyl-L-alanine + ADP + phosphate + H(+). It participates in cell wall biogenesis; peptidoglycan biosynthesis. In terms of biological role, cell wall formation. This Clostridium botulinum (strain ATCC 19397 / Type A) protein is UDP-N-acetylmuramate--L-alanine ligase.